The chain runs to 464 residues: MRAARRGLHCAGAERPRRRGRLWDSSGVPQRQKRPGPWRTQTQEQMSRDVCIHTWPCTYYLEPKRRWVTGQLSLTSLSLRFMTDSTGEILVSFPLSSIVEIKKEASHFIFSSITILEKGHAKHWFSSLRPSRNVVFSIIEHFWRELLLSQPGAVADASVPRTRGEELTGLMAGSQKRLEDTARVLHHQGQQLDSVMRGLDKMESDLEVADRLLTELESPAWWPFSSKLWKTPPETKPREDVSMTSCEPFGKEGILIKIPAVISHRTESHVKPGRLTVLVSGLEIHDSSSLLMHRFEREDVDDIKVHSPYEISIRQRFIGKPDMAYRLISAKMPEVIPILEVQFSKKMELLEDALVLRSARTSSPAEKSCSVWHAASGLMGRTLHREPPAGDQEGTALHLQTSLPALSEADTQELTQILRRMKGLALEAESELERQDEALDGVAAAVDRATLTIDKHNRRMKRLT.

The segment at 20-42 (GRLWDSSGVPQRQKRPGPWRTQT) is disordered. 2 consecutive t-SNARE coiled-coil homology domains span residues 154 to 216 (VADA…LTEL) and 401 to 463 (TSLP…MKRL).

Belongs to the SVAP1 family. In terms of assembly, forms a complex containing SNAP47, VAMP2 and STX1A. Associates with the BLOC-1 complex. Interacts with BLOC1S6.

The protein resides in the endomembrane system. The protein localises to the cytoplasm. Its subcellular location is the perinuclear region. Functionally, plays a role in intracellular membrane fusion. This is Synaptosomal-associated protein 47 (SNAP47) from Homo sapiens (Human).